A 448-amino-acid chain; its full sequence is Divalent metal cation transporter MntH (448 aa).

A run of 11 helical transmembrane segments spans residues leucine 41–tryptophan 61, serine 69–leucine 89, glycine 117–isoleucine 137, phenylalanine 147–phenylalanine 167, isoleucine 176–valine 196, isoleucine 215–proline 235, phenylalanine 270–phenylalanine 290, leucine 307–alanine 327, valine 363–glutamate 383, leucine 384–valine 404, and isoleucine 424–threonine 444.

It belongs to the NRAMP family.

Its subcellular location is the cell membrane. In terms of biological role, h(+)-stimulated, divalent metal cation uptake system. The sequence is that of Divalent metal cation transporter MntH from Listeria innocua serovar 6a (strain ATCC BAA-680 / CLIP 11262).